A 276-amino-acid chain; its full sequence is Large ribosomal subunit protein uL2 (276 aa).

Residues 208–276 (KAGRNRHRGI…KLIISRRKGK (69 aa)) are disordered. Residues 230-240 (DHPHGGGEGKK) are compositionally biased toward basic and acidic residues. The span at 255–276 (KGAKTRRKKASDKLIISRRKGK) shows a compositional bias: basic residues.

It belongs to the universal ribosomal protein uL2 family. In terms of assembly, part of the 50S ribosomal subunit. Forms a bridge to the 30S subunit in the 70S ribosome.

Functionally, one of the primary rRNA binding proteins. Required for association of the 30S and 50S subunits to form the 70S ribosome, for tRNA binding and peptide bond formation. It has been suggested to have peptidyltransferase activity; this is somewhat controversial. Makes several contacts with the 16S rRNA in the 70S ribosome. The sequence is that of Large ribosomal subunit protein uL2 from Campylobacter lari (strain RM2100 / D67 / ATCC BAA-1060).